The following is a 177-amino-acid chain: Peptide methionine sulfoxide reductase MsrA (177 aa).

Cys10 is a catalytic residue.

It belongs to the MsrA Met sulfoxide reductase family.

The enzyme catalyses L-methionyl-[protein] + [thioredoxin]-disulfide + H2O = L-methionyl-(S)-S-oxide-[protein] + [thioredoxin]-dithiol. The catalysed reaction is [thioredoxin]-disulfide + L-methionine + H2O = L-methionine (S)-S-oxide + [thioredoxin]-dithiol. Its function is as follows. Has an important function as a repair enzyme for proteins that have been inactivated by oxidation. Catalyzes the reversible oxidation-reduction of methionine sulfoxide in proteins to methionine. The sequence is that of Peptide methionine sulfoxide reductase MsrA from Saccharolobus solfataricus (strain ATCC 35092 / DSM 1617 / JCM 11322 / P2) (Sulfolobus solfataricus).